The following is a 117-amino-acid chain: Large ribosomal subunit protein uL22 (117 aa).

Belongs to the universal ribosomal protein uL22 family. As to quaternary structure, part of the 50S ribosomal subunit.

This protein binds specifically to 23S rRNA; its binding is stimulated by other ribosomal proteins, e.g. L4, L17, and L20. It is important during the early stages of 50S assembly. It makes multiple contacts with different domains of the 23S rRNA in the assembled 50S subunit and ribosome. In terms of biological role, the globular domain of the protein is located near the polypeptide exit tunnel on the outside of the subunit, while an extended beta-hairpin is found that lines the wall of the exit tunnel in the center of the 70S ribosome. This Lactobacillus gasseri (strain ATCC 33323 / DSM 20243 / BCRC 14619 / CIP 102991 / JCM 1131 / KCTC 3163 / NCIMB 11718 / NCTC 13722 / AM63) protein is Large ribosomal subunit protein uL22.